Consider the following 503-residue polypeptide: Dihydropyrimidinase (503 aa).

Residues His66, His68, and Lys158 each coordinate Zn(2+). Residue Lys158 is modified to N6-carboxylysine. Tyr163 lines the substrate pocket. Zn(2+) is bound by residues His191, His247, and Asp325. Asn346 is a substrate binding site.

It belongs to the metallo-dependent hydrolases superfamily. Hydantoinase/dihydropyrimidinase family. Homotetramer. Requires Zn(2+) as cofactor. Post-translationally, carboxylation allows a single lysine to coordinate two zinc ions.

The catalysed reaction is 5,6-dihydrouracil + H2O = 3-(carbamoylamino)propanoate + H(+). Functionally, catalyzes the second step of the reductive pyrimidine degradation, the reversible hydrolytic ring opening of dihydropyrimidines. Can catalyze the ring opening of 5,6-dihydrouracil to N-carbamyl-alanine and of 5,6-dihydrothymine to N-carbamyl-amino isobutyrate. In Dictyostelium discoideum (Social amoeba), this protein is Dihydropyrimidinase (pyd2).